We begin with the raw amino-acid sequence, 257 residues long: MSTANGDLISSLYPPPPVYVKFFTTENLNKLQEWQRQQNDEEIETKQEEADDKDEKDNEKQNETQDTVPPGELRFLVPPQPPSGTHYRGYGNIWSFEDKLPSLKSANWEQLYKDDDESITSETKIKELHKLMDSLLLNFLELIGLASIDPSQYESKIKDISLILININHLLNTYRPHQSRESLIMLLRKQIDAKRASINQVEKVCSEVKQKLLKLTNIQDVYKKDSIVLPDNSDNSPMAENAESIKDEIIKKLLSEH.

Residues 33–74 (EWQRQQNDEEIETKQEEADDKDEKDNEKQNETQDTVPPGELR) form a disordered region. Positions 44–63 (ETKQEEADDKDEKDNEKQNE) are enriched in basic and acidic residues.

The protein belongs to the Mediator complex subunit 7 family. In terms of assembly, component of the Mediator complex.

It is found in the nucleus. Functionally, component of the Mediator complex, a coactivator involved in the regulated transcription of nearly all RNA polymerase II-dependent genes. Mediator functions as a bridge to convey information from gene-specific regulatory proteins to the basal RNA polymerase II transcription machinery. Mediator is recruited to promoters by direct interactions with regulatory proteins and serves as a scaffold for the assembly of a functional preinitiation complex with RNA polymerase II and the general transcription factors. The polypeptide is Mediator of RNA polymerase II transcription subunit 7 (MED7) (Scheffersomyces stipitis (strain ATCC 58785 / CBS 6054 / NBRC 10063 / NRRL Y-11545) (Yeast)).